We begin with the raw amino-acid sequence, 180 residues long: ATP synthase subunit delta (180 aa).

Belongs to the ATPase delta chain family. In terms of assembly, F-type ATPases have 2 components, F(1) - the catalytic core - and F(0) - the membrane proton channel. F(1) has five subunits: alpha(3), beta(3), gamma(1), delta(1), epsilon(1). F(0) has three main subunits: a(1), b(2) and c(10-14). The alpha and beta chains form an alternating ring which encloses part of the gamma chain. F(1) is attached to F(0) by a central stalk formed by the gamma and epsilon chains, while a peripheral stalk is formed by the delta and b chains.

The protein resides in the cell inner membrane. Functionally, f(1)F(0) ATP synthase produces ATP from ADP in the presence of a proton or sodium gradient. F-type ATPases consist of two structural domains, F(1) containing the extramembraneous catalytic core and F(0) containing the membrane proton channel, linked together by a central stalk and a peripheral stalk. During catalysis, ATP synthesis in the catalytic domain of F(1) is coupled via a rotary mechanism of the central stalk subunits to proton translocation. In terms of biological role, this protein is part of the stalk that links CF(0) to CF(1). It either transmits conformational changes from CF(0) to CF(1) or is implicated in proton conduction. The sequence is that of ATP synthase subunit delta from Chlorobium phaeobacteroides (strain BS1).